The primary structure comprises 256 residues: Tetraspanin-32 (256 aa).

4 helical membrane-spanning segments follow: residues L15–I35, A61–I81, L90–F110, and C203–I223.

Belongs to the tetraspanin (TM4SF) family. In terms of tissue distribution, expressed exclusively in hematopoietic tissues. Expression detected in spleen, thymus, bone marrow and peripheral blood leukocytes but not in heart, brain, lung, liver, kidney or testis.

The protein localises to the membrane. This is Tetraspanin-32 (Tspan32) from Mus musculus (Mouse).